A 106-amino-acid chain; its full sequence is Iron-sulfur cluster assembly protein CyaY (106 aa).

Belongs to the frataxin family.

Involved in iron-sulfur (Fe-S) cluster assembly. May act as a regulator of Fe-S biogenesis. The sequence is that of Iron-sulfur cluster assembly protein CyaY from Serratia proteamaculans (strain 568).